The primary structure comprises 296 residues: MGPTASGKTALAIALVEQHNCEIISVDSALIYRGMDVGSAKPNAEELGKAPHRLIDIRDPAESYSAADFRTDALQAIEEILAKGKTPLLVGGTMMYFKALLEGLSPLPAADDEIRKQIQIEADTYGWNHLHDELKQIDPVSAERIHPNDPQRLSRAIEVYRISGKSLTELTKIKSEPLPYDVVQFAISPKDRKQLHLSIEERFKLMLNQGFVEEVRSLRERSELHIDLPSMRCVGYRQCWQYLNGDYDYDTMVEKAVVATRQLAKRQLTWLRGWPELNWLESGSDSNLTTVLRHCR.

2-9 (GPTASGKT) is an ATP binding site. 4–9 (TASGKT) serves as a coordination point for substrate. 3 interaction with substrate tRNA regions span residues 27–30 (DSAL), 151–155 (QRLSR), and 232–237 (RCVGYR).

Belongs to the IPP transferase family. As to quaternary structure, monomer. Requires Mg(2+) as cofactor.

The enzyme catalyses adenosine(37) in tRNA + dimethylallyl diphosphate = N(6)-dimethylallyladenosine(37) in tRNA + diphosphate. In terms of biological role, catalyzes the transfer of a dimethylallyl group onto the adenine at position 37 in tRNAs that read codons beginning with uridine, leading to the formation of N6-(dimethylallyl)adenosine (i(6)A). This Shewanella woodyi (strain ATCC 51908 / MS32) protein is tRNA dimethylallyltransferase.